We begin with the raw amino-acid sequence, 330 residues long: tRNA U34 carboxymethyltransferase (330 aa).

Carboxy-S-adenosyl-L-methionine-binding positions include lysine 91, tryptophan 105, lysine 110, glycine 130, 152–154 (DPS), 181–182 (IE), methionine 196, tyrosine 200, and arginine 315.

The protein belongs to the class I-like SAM-binding methyltransferase superfamily. CmoB family. Homotetramer.

The catalysed reaction is carboxy-S-adenosyl-L-methionine + 5-hydroxyuridine(34) in tRNA = 5-carboxymethoxyuridine(34) in tRNA + S-adenosyl-L-homocysteine + H(+). Catalyzes carboxymethyl transfer from carboxy-S-adenosyl-L-methionine (Cx-SAM) to 5-hydroxyuridine (ho5U) to form 5-carboxymethoxyuridine (cmo5U) at position 34 in tRNAs. The polypeptide is tRNA U34 carboxymethyltransferase (Shewanella piezotolerans (strain WP3 / JCM 13877)).